A 323-amino-acid polypeptide reads, in one-letter code: Prostaglandin-E(2) 9-reductase (323 aa).

Residues 23–24 (TY) and aspartate 50 each bind NADP(+). Position 24 (tyrosine 24) interacts with substrate. Tyrosine 55 functions as the Proton donor in the catalytic mechanism. Substrate is bound at residue histidine 117. NADP(+) contacts are provided by residues 166 to 167 (SN), glutamine 190, 216 to 221 (YSALGS), and 270 to 280 (KSFTEKRIKEN).

This sequence belongs to the aldo/keto reductase family.

It is found in the cytoplasm. The catalysed reaction is prostaglandin F2alpha + NADP(+) = prostaglandin E2 + NADPH + H(+). It catalyses the reaction (17R,20S)-17,20-dihydroxypregn-4-en-3-one + NADP(+) = 17alpha-hydroxyprogesterone + NADPH + H(+). The enzyme catalyses (17R,20S)-17,20-dihydroxypregn-4-en-3-one + NAD(+) = 17alpha-hydroxyprogesterone + NADH + H(+). Can convert prostaglandin E2 to prostaglandin F2-alpha. This Oryctolagus cuniculus (Rabbit) protein is Prostaglandin-E(2) 9-reductase (AKR1C5).